The sequence spans 199 residues: Thymidylate kinase (199 aa).

7 to 14 (GTEGVGKT) contributes to the ATP binding site.

It belongs to the thymidylate kinase family.

The catalysed reaction is dTMP + ATP = dTDP + ADP. Its function is as follows. Phosphorylation of dTMP to form dTDP in both de novo and salvage pathways of dTTP synthesis. The chain is Thymidylate kinase from Acinetobacter baumannii (strain ACICU).